Consider the following 822-residue polypeptide: Putative endoplasmic reticulum metallopeptidase 1 (822 aa).

Topologically, residues 1 to 14 (MVLVCASSSKCKRN) are cytoplasmic. A helical transmembrane segment spans residues 15–35 (TFLQLAMVLFAVVMARIALYF). Residues 36–365 (HNHLDEPLVD…FNSLFFMYSK (330 aa)) lie on the Lumenal side of the membrane. Asn146 carries N-linked (GlcNAc...) asparagine glycosylation. Zn(2+) is bound by residues His161 and Asp173. Glu207 functions as the Proton acceptor in the catalytic mechanism. Zn(2+) contacts are provided by Glu208 and Glu234. An N-linked (GlcNAc...) asparagine glycan is attached at Asn291. His307 provides a ligand contact to Zn(2+). Residues 366 to 384 (LTSKILNTLVGGLGILLTL) traverse the membrane as a helical segment. Residues 385–392 (RGSEGSFT) are Cytoplasmic-facing. Residues 393-413 (VALIAQVISIAGIFVIPNIWA) traverse the membrane as a helical segment. Residues 414–431 (YILGNVLDCGMSWFRNEY) are Lumenal-facing. A helical transmembrane segment spans residues 432–452 (WPLFIYLPAIFASLFFTESLF). At 453-463 (KRSEHLALRAT) the chain is on the cytoplasmic side. Residues 464–484 (IFIFSLLTFIPLPSAYLFTII) form a helical membrane-spanning segment. Asp485 is a topological domain (lumenal). A helical transmembrane segment spans residues 486–506 (FFMVFALFLNDKILAKPGTVH). The Cytoplasmic segment spans residues 507 to 514 (PLTYFIGS). The helical transmembrane segment at 515 to 535 (IGAMTVGFESAINLLEIFVPL) threads the bilayer. Over 536–547 (TGRIGTDKVADN) the chain is Lumenal. A helical transmembrane segment spans residues 548 to 568 (VVATVCVCGFNIYFPLMSPWI). Residues 569-575 (QRFRSRC) lie on the Cytoplasmic side of the membrane. The helical transmembrane segment at 576 to 596 (CFRLGLLFSIFVVGFSSFILA) threads the bilayer. Over 597 to 822 (KQDTYYDSLH…GVVSGNFKLE (226 aa)) the chain is Lumenal. N-linked (GlcNAc...) asparagine glycans are attached at residues Asn617, Asn682, Asn706, and Asn758.

This sequence belongs to the peptidase M28 family. M28B subfamily. It depends on Zn(2+) as a cofactor.

The protein resides in the endoplasmic reticulum membrane. This chain is Putative endoplasmic reticulum metallopeptidase 1, found in Schizosaccharomyces pombe (strain 972 / ATCC 24843) (Fission yeast).